Here is a 270-residue protein sequence, read N- to C-terminus: Hemin import ATP-binding protein HmuV (270 aa).

In terms of domain architecture, ABC transporter spans 5-242; the sequence is LEAEAATYSV…SLINRVFDIE (238 aa). 37–44 lines the ATP pocket; that stretch reads GPNGAGKS.

It belongs to the ABC transporter superfamily. Heme (hemin) importer (TC 3.A.1.14.5) family. In terms of assembly, the complex is composed of two ATP-binding proteins (HmuV), two transmembrane proteins (HmuU) and a solute-binding protein (HmuT).

It localises to the cell inner membrane. In terms of biological role, part of the ABC transporter complex HmuTUV involved in hemin import. Responsible for energy coupling to the transport system. The protein is Hemin import ATP-binding protein HmuV of Rhodopseudomonas palustris (strain BisA53).